Here is a 108-residue protein sequence, read N- to C-terminus: Tubulin-specific chaperone A (108 aa).

An N-acetylalanine modification is found at A2.

Belongs to the TBCA family. Supercomplex made of cofactors A to E. Cofactors A and D function by capturing and stabilizing tubulin in a quasi-native conformation. Cofactor E binds to the cofactor D-tubulin complex; interaction with cofactor C then causes the release of tubulin polypeptides that are committed to the native state.

The protein resides in the cytoplasm. Its subcellular location is the cytoskeleton. Tubulin-folding protein; involved in the early step of the tubulin folding pathway. The chain is Tubulin-specific chaperone A (TBCA) from Homo sapiens (Human).